Here is a 290-residue protein sequence, read N- to C-terminus: ATP synthase gamma chain (290 aa).

It belongs to the ATPase gamma chain family. As to quaternary structure, F-type ATPases have 2 components, CF(1) - the catalytic core - and CF(0) - the membrane proton channel. CF(1) has five subunits: alpha(3), beta(3), gamma(1), delta(1), epsilon(1). CF(0) has three main subunits: a, b and c.

It is found in the cell membrane. Its function is as follows. Produces ATP from ADP in the presence of a proton gradient across the membrane. The gamma chain is believed to be important in regulating ATPase activity and the flow of protons through the CF(0) complex. This Listeria welshimeri serovar 6b (strain ATCC 35897 / DSM 20650 / CCUG 15529 / CIP 8149 / NCTC 11857 / SLCC 5334 / V8) protein is ATP synthase gamma chain.